A 296-amino-acid polypeptide reads, in one-letter code: Cobalamin trafficking protein CblD (296 aa).

The N-terminal 38 residues, 1 to 38 (MAHVLCNRARLVSYLPGFCSLVKRVINPRAFSTAGSSG), are a transit peptide targeting the mitochondrion. Residue K203 is modified to N6-acetyllysine.

As to quaternary structure, heterodimer with MMACHC. Forms a multiprotein complex with MMACHC, MTR and MTRR.

The protein localises to the cytoplasm. It is found in the mitochondrion. In terms of biological role, involved in cobalamin metabolism and trafficking. Plays a role in regulating the biosynthesis and the proportion of two coenzymes, methylcob(III)alamin (MeCbl) and 5'-deoxyadenosylcobalamin (AdoCbl). Promotes oxidation of cob(II)alamin bound to MMACHC. The processing of cobalamin in the cytosol occurs in a multiprotein complex composed of at least MMACHC, MMADHC, MTRR (methionine synthase reductase) and MTR (methionine synthase) which may contribute to shuttle safely and efficiently cobalamin towards MTR in order to produce methionine. This chain is Cobalamin trafficking protein CblD (Mmadhc), found in Rattus norvegicus (Rat).